The chain runs to 316 residues: MSSTDIWISNDASTFQKAQLPTQLRHVKVIKIREDSIGRIILLISTEITNEENADPDLSEIFISDSQGLKFSPVEWTPNHQFGNFRLTFPDFLKGTIFGSFHPSIDYSNHQVNYTENIAGGETKISVDNGLTWSNLKVVDEENADSFGCDITRPERCSLQGYFYNLKLSNPSAGIILMTGSVGDDNEFDRKDRKTFISRDGGLTWRVAHNSSGLYATGDLGNIIVYIPSPSYKDGDVQSKLYFSLDQGRTWNQYELVDALFYIHPLELINTTPDGSGSKFILSGHLITTASQEGNNTNISYIARSVLYAIDFSAAF.

BNR repeat units lie at residues 62–73 (FISDSQGLKFSP), 124–135 (KISVDNGLTWSN), 196–207 (FISRDGGLTWRV), and 242–253 (YFSLDQGRTWNQ).

This is an uncharacterized protein from Saccharomyces cerevisiae (strain ATCC 204508 / S288c) (Baker's yeast).